A 208-amino-acid polypeptide reads, in one-letter code: Outer-membrane lipoprotein carrier protein (208 aa).

An N-terminal signal peptide occupies residues 1-22 (MKNLLCAVMLTSPLLYSTAVFA).

Belongs to the LolA family. Monomer.

The protein resides in the periplasm. In terms of biological role, participates in the translocation of lipoproteins from the inner membrane to the outer membrane. Only forms a complex with a lipoprotein if the residue after the N-terminal Cys is not an aspartate (The Asp acts as a targeting signal to indicate that the lipoprotein should stay in the inner membrane). This Shewanella sp. (strain W3-18-1) protein is Outer-membrane lipoprotein carrier protein.